An 818-amino-acid polypeptide reads, in one-letter code: Lon protease (818 aa).

A Lon N-terminal domain is found at 14–216 (LPVLPLRDVV…KVFALIEREI (203 aa)). ATP is bound at residue 370-377 (GPPGVGKT). A Lon proteolytic domain is found at 605–786 (ESLVGIVTGL…DEVIKVALMH (182 aa)). Active-site residues include Ser692 and Lys735.

This sequence belongs to the peptidase S16 family. In terms of assembly, homohexamer. Organized in a ring with a central cavity.

It is found in the cytoplasm. The enzyme catalyses Hydrolysis of proteins in presence of ATP.. In terms of biological role, ATP-dependent serine protease that mediates the selective degradation of mutant and abnormal proteins as well as certain short-lived regulatory proteins. Required for cellular homeostasis and for survival from DNA damage and developmental changes induced by stress. Degrades polypeptides processively to yield small peptide fragments that are 5 to 10 amino acids long. Binds to DNA in a double-stranded, site-specific manner. The sequence is that of Lon protease from Wolbachia pipientis subsp. Culex pipiens (strain wPip).